A 275-amino-acid polypeptide reads, in one-letter code: NH(3)-dependent NAD(+) synthetase (275 aa).

Residue 47-54 coordinates ATP; sequence GISGGQDS. Position 53 (Asp-53) interacts with Mg(2+). Deamido-NAD(+) is bound at residue Arg-141. Thr-161 contacts ATP. Glu-166 serves as a coordination point for Mg(2+). Residues Lys-174 and Asp-181 each coordinate deamido-NAD(+). ATP contacts are provided by Lys-190 and Thr-212. Residue 261–262 participates in deamido-NAD(+) binding; sequence HK.

It belongs to the NAD synthetase family. In terms of assembly, homodimer.

The catalysed reaction is deamido-NAD(+) + NH4(+) + ATP = AMP + diphosphate + NAD(+) + H(+). It functions in the pathway cofactor biosynthesis; NAD(+) biosynthesis; NAD(+) from deamido-NAD(+) (ammonia route): step 1/1. In terms of biological role, catalyzes the ATP-dependent amidation of deamido-NAD to form NAD. Uses ammonia as a nitrogen source. The polypeptide is NH(3)-dependent NAD(+) synthetase (Latilactobacillus sakei subsp. sakei (strain 23K) (Lactobacillus sakei subsp. sakei)).